The chain runs to 127 residues: Ribonuclease P protein component 1 (127 aa).

This sequence belongs to the eukaryotic/archaeal RNase P protein component 1 family. As to quaternary structure, consists of a catalytic RNA component and at least 4-5 protein subunits.

It is found in the cytoplasm. It catalyses the reaction Endonucleolytic cleavage of RNA, removing 5'-extranucleotides from tRNA precursor.. Part of ribonuclease P, a protein complex that generates mature tRNA molecules by cleaving their 5'-ends. In Pyrococcus abyssi (strain GE5 / Orsay), this protein is Ribonuclease P protein component 1.